The chain runs to 27 residues: Urumin (27 aa).

Expressed by the skin glands.

It localises to the secreted. Its function is as follows. Amphibian peptide that shows viricidal activity against human H1N1 influenza A virus. It specifically targets the conserved stalk region of H1 hemagglutinin, and acts by actively destroying influenza virions. It shows a reduced activity on human H3N2 influenza A virus and no activity against other viruses (HIV, SIV, HSV-II, hepatitis C, Ebola, Zika, and Dengue viruses). In vivo, the peptide also protects mice infected with mouse-adapted influenza virus from lethal influenza infection. The peptide synthesized in D-amino acids is inactive. The protein is Urumin of Hydrophylax bahuvistara (Wide-spread fungoid frog).